The sequence spans 281 residues: Cytosolic Fe-S cluster assembly factor CFD1 (281 aa).

Position 24 to 31 (24 to 31 (GKGGVGKS)) interacts with ATP. [4Fe-4S] cluster is bound by residues cysteine 201 and cysteine 204.

The protein belongs to the Mrp/NBP35 ATP-binding proteins family. NUBP2/CFD1 subfamily. In terms of assembly, heterotetramer of 2 NBP35 and 2 CFD1 chains. [4Fe-4S] cluster serves as cofactor.

Its subcellular location is the cytoplasm. In terms of biological role, component of the cytosolic iron-sulfur (Fe/S) protein assembly (CIA) machinery. Required for maturation of extramitochondrial Fe-S proteins. The NBP35-CFD1 heterotetramer forms a Fe-S scaffold complex, mediating the de novo assembly of an Fe-S cluster and its transfer to target apoproteins. Required for biogenesis and export of both ribosomal subunits, which may reflect a role in assembly of the Fe/S clusters in RLI1, a protein which performs rRNA processing and ribosome export. This chain is Cytosolic Fe-S cluster assembly factor CFD1, found in Eremothecium gossypii (strain ATCC 10895 / CBS 109.51 / FGSC 9923 / NRRL Y-1056) (Yeast).